We begin with the raw amino-acid sequence, 137 residues long: Protein Turandot X (137 aa).

An N-terminal signal peptide occupies residues 1-24 (MRVPVFQLSCLLGLIVCLLCSVKA).

Belongs to the Turandot family.

The protein localises to the secreted. In terms of biological role, a humoral factor that may play a role in stress tolerance. This is Protein Turandot X from Drosophila pseudoobscura pseudoobscura (Fruit fly).